We begin with the raw amino-acid sequence, 253 residues long: 3-deoxy-manno-octulosonate cytidylyltransferase (253 aa).

Belongs to the KdsB family.

Its subcellular location is the cytoplasm. The catalysed reaction is 3-deoxy-alpha-D-manno-oct-2-ulosonate + CTP = CMP-3-deoxy-beta-D-manno-octulosonate + diphosphate. Its pathway is nucleotide-sugar biosynthesis; CMP-3-deoxy-D-manno-octulosonate biosynthesis; CMP-3-deoxy-D-manno-octulosonate from 3-deoxy-D-manno-octulosonate and CTP: step 1/1. The protein operates within bacterial outer membrane biogenesis; lipopolysaccharide biosynthesis. Activates KDO (a required 8-carbon sugar) for incorporation into bacterial lipopolysaccharide in Gram-negative bacteria. This chain is 3-deoxy-manno-octulosonate cytidylyltransferase, found in Pseudoalteromonas translucida (strain TAC 125).